The chain runs to 116 residues: Galanin-like peptide (116 aa).

The signal sequence occupies residues 1 to 24 (MAPPSVPLVLLLVLLLSLAETPAS). A propeptide spanning residues 87–116 (NVMETFAKPEIGDLGMLSMKIPKEEDVLKS) is cleaved from the precursor.

The protein belongs to the galanin family. As to expression, isoform 2 is found in ganglia of ganglioneuroma and ganglioneuroblastoma, as well as in differentiated tumor cells of neuroblastoma tissues. Not found in undifferentiated neuroblasts. Isoform 2 is found in the skin, in pericytes covering microvascular arterioles and venules on their abluminal surfaces. In larger vessels, isoform 2 is expressed in layers of smooth muscle cells. Isoform 2 is not detected in endothelial cells.

It localises to the secreted. In terms of biological role, hypothalamic neuropeptide which binds to the G-protein-coupled galanin receptors (GALR1, GALR2 and GALR3). Involved in a large number of putative physiological functions in CNS homeostatic processes, including the regulation of gonadotropin-releasing hormone secretion. Functionally, exhibits potent and dose-dependent vasoconstrictor and anti-edema activity in the cutaneous microvasculature, a physiologic effects which does not appear to be mediated via GALR1 or GALR2. Exhibits antimicrobial activity against Gram-negative bacterias, inducing bacterial membrane blebbing. This is Galanin-like peptide (GALP) from Homo sapiens (Human).